Reading from the N-terminus, the 163-residue chain is Transcriptional repressor NrdR (163 aa).

A zinc finger lies at 3–34; that stretch reads CPFCRHDDSRVVDSRTTDDGSSIRRRRQCPNC. Residues 46 to 136 form the ATP-cone domain; that stretch reads LSVIKRSGAP…VYQAFDSLAD (91 aa).

Belongs to the NrdR family. Requires Zn(2+) as cofactor.

Negatively regulates transcription of bacterial ribonucleotide reductase nrd genes and operons by binding to NrdR-boxes. This is Transcriptional repressor NrdR from Kineococcus radiotolerans (strain ATCC BAA-149 / DSM 14245 / SRS30216).